The following is a 367-amino-acid chain: Ribosomal RNA large subunit methyltransferase M (367 aa).

S-adenosyl-L-methionine is bound by residues Ser-188, 221–224, Asp-240, Asp-260, and Asp-277; that span reads CPGG. The active-site Proton acceptor is Lys-306.

This sequence belongs to the class I-like SAM-binding methyltransferase superfamily. RNA methyltransferase RlmE family. RlmM subfamily. As to quaternary structure, monomer.

It localises to the cytoplasm. It carries out the reaction cytidine(2498) in 23S rRNA + S-adenosyl-L-methionine = 2'-O-methylcytidine(2498) in 23S rRNA + S-adenosyl-L-homocysteine + H(+). In terms of biological role, catalyzes the 2'-O-methylation at nucleotide C2498 in 23S rRNA. In Serratia proteamaculans (strain 568), this protein is Ribosomal RNA large subunit methyltransferase M.